We begin with the raw amino-acid sequence, 378 residues long: 8-demethyl-8-alpha-L-rhamnosyl tetracenomycin-C 2'-O-methyltransferase (378 aa).

S-adenosyl-L-methionine contacts are provided by residues 195–201 (EIGVGGY), Ser210, Asp227, 245–246 (DQ), and Asp268. Asp268 contributes to the Mg(2+) binding site. The active-site Proton acceptor is the His271. 2 residues coordinate Mg(2+): Glu296 and Asp297.

Belongs to the methyltransferase OleY/MycE family. It depends on Mg(2+) as a cofactor.

The catalysed reaction is 8-demethyl-8-alpha-L-rhamnosyl-tetracenomycin C + S-adenosyl-L-methionine = 8-demethyl-8-(2-O-methyl-alpha-L-rhamnosyl)-tetracenomycin C + S-adenosyl-L-homocysteine + H(+). It participates in antibiotic biosynthesis. In terms of biological role, O-methyltransferase involved in the biosynthesis of the permethylated L-rhamnose moiety of elloramycin, an antitumor polyketide. Mediates the methylation of the hydroxy groups at the 2'-position after the sugar moiety has been attached to the aglycon. The polypeptide is 8-demethyl-8-alpha-L-rhamnosyl tetracenomycin-C 2'-O-methyltransferase (Streptomyces olivaceus).